Reading from the N-terminus, the 629-residue chain is Dihydroxy-acid dehydratase 2 (629 aa).

Aspartate 82 is a binding site for Mg(2+). Residue cysteine 123 coordinates [2Fe-2S] cluster. Positions 124 and 125 each coordinate Mg(2+). An N6-carboxylysine modification is found at lysine 125. [2Fe-2S] cluster is bound at residue cysteine 197. Glutamate 493 lines the Mg(2+) pocket. The active-site Proton acceptor is serine 519. Residues 603 to 629 are disordered; sequence DKGGVRRLPPDELGGPEAAFDTQTRAG.

This sequence belongs to the IlvD/Edd family. Homodimer. It depends on [2Fe-2S] cluster as a cofactor. Mg(2+) is required as a cofactor.

The enzyme catalyses (2R)-2,3-dihydroxy-3-methylbutanoate = 3-methyl-2-oxobutanoate + H2O. The catalysed reaction is (2R,3R)-2,3-dihydroxy-3-methylpentanoate = (S)-3-methyl-2-oxopentanoate + H2O. Its pathway is amino-acid biosynthesis; L-isoleucine biosynthesis; L-isoleucine from 2-oxobutanoate: step 3/4. The protein operates within amino-acid biosynthesis; L-valine biosynthesis; L-valine from pyruvate: step 3/4. Functionally, functions in the biosynthesis of branched-chain amino acids. Catalyzes the dehydration of (2R,3R)-2,3-dihydroxy-3-methylpentanoate (2,3-dihydroxy-3-methylvalerate) into 2-oxo-3-methylpentanoate (2-oxo-3-methylvalerate) and of (2R)-2,3-dihydroxy-3-methylbutanoate (2,3-dihydroxyisovalerate) into 2-oxo-3-methylbutanoate (2-oxoisovalerate), the penultimate precursor to L-isoleucine and L-valine, respectively. This is Dihydroxy-acid dehydratase 2 from Nocardia farcinica (strain IFM 10152).